A 306-amino-acid polypeptide reads, in one-letter code: UDP-3-O-acyl-N-acetylglucosamine deacetylase (306 aa).

Residues His78, His237, and Asp241 each coordinate Zn(2+). The active-site Proton donor is His264.

The protein belongs to the LpxC family. Zn(2+) is required as a cofactor.

The catalysed reaction is a UDP-3-O-[(3R)-3-hydroxyacyl]-N-acetyl-alpha-D-glucosamine + H2O = a UDP-3-O-[(3R)-3-hydroxyacyl]-alpha-D-glucosamine + acetate. It participates in glycolipid biosynthesis; lipid IV(A) biosynthesis; lipid IV(A) from (3R)-3-hydroxytetradecanoyl-[acyl-carrier-protein] and UDP-N-acetyl-alpha-D-glucosamine: step 2/6. Functionally, catalyzes the hydrolysis of UDP-3-O-myristoyl-N-acetylglucosamine to form UDP-3-O-myristoylglucosamine and acetate, the committed step in lipid A biosynthesis. The sequence is that of UDP-3-O-acyl-N-acetylglucosamine deacetylase from Aromatoleum aromaticum (strain DSM 19018 / LMG 30748 / EbN1) (Azoarcus sp. (strain EbN1)).